A 159-amino-acid chain; its full sequence is RNA pyrophosphohydrolase (159 aa).

In terms of domain architecture, Nudix hydrolase spans 6 to 149 (GFRPNVGIIL…KREVYRRALK (144 aa)). The Nudix box signature appears at 38–59 (GGINPDETPEDALYRELNEEVG).

It belongs to the Nudix hydrolase family. RppH subfamily. It depends on a divalent metal cation as a cofactor.

Accelerates the degradation of transcripts by removing pyrophosphate from the 5'-end of triphosphorylated RNA, leading to a more labile monophosphorylated state that can stimulate subsequent ribonuclease cleavage. This is RNA pyrophosphohydrolase from Pseudomonas entomophila (strain L48).